The chain runs to 332 residues: Glycerol-3-phosphate dehydrogenase [NAD(P)+] (332 aa).

Residues Trp-11, Arg-30, and Lys-108 each coordinate NADPH. Residues Lys-108, Gly-137, and Ser-139 each coordinate sn-glycerol 3-phosphate. An NADPH-binding site is contributed by Ala-141. The sn-glycerol 3-phosphate site is built by Lys-192, Asp-245, Ser-255, Arg-256, and Asn-257. The Proton acceptor role is filled by Lys-192. Residue Arg-256 participates in NADPH binding. Residues Val-280 and Glu-282 each coordinate NADPH.

Belongs to the NAD-dependent glycerol-3-phosphate dehydrogenase family.

The protein localises to the cytoplasm. It carries out the reaction sn-glycerol 3-phosphate + NAD(+) = dihydroxyacetone phosphate + NADH + H(+). The catalysed reaction is sn-glycerol 3-phosphate + NADP(+) = dihydroxyacetone phosphate + NADPH + H(+). It functions in the pathway membrane lipid metabolism; glycerophospholipid metabolism. Functionally, catalyzes the reduction of the glycolytic intermediate dihydroxyacetone phosphate (DHAP) to sn-glycerol 3-phosphate (G3P), the key precursor for phospholipid synthesis. This Burkholderia orbicola (strain AU 1054) protein is Glycerol-3-phosphate dehydrogenase [NAD(P)+].